The following is a 112-amino-acid chain: MMEVTAKLKGAPLSAQKGRLVADMIRNMNVSGALDVLKFTPKKGAKLMLKLLESAIANAENNNGADIDDLKVGMVCVDEATTLKRISPRAKGRANRICKRTCHITIKVSDEE.

Belongs to the universal ribosomal protein uL22 family. Part of the 50S ribosomal subunit.

Functionally, this protein binds specifically to 23S rRNA; its binding is stimulated by other ribosomal proteins, e.g. L4, L17, and L20. It is important during the early stages of 50S assembly. It makes multiple contacts with different domains of the 23S rRNA in the assembled 50S subunit and ribosome. The globular domain of the protein is located near the polypeptide exit tunnel on the outside of the subunit, while an extended beta-hairpin is found that lines the wall of the exit tunnel in the center of the 70S ribosome. The polypeptide is Large ribosomal subunit protein uL22 (Legionella pneumophila subsp. pneumophila (strain Philadelphia 1 / ATCC 33152 / DSM 7513)).